We begin with the raw amino-acid sequence, 604 residues long: Afamin (604 aa).

The N-terminal stretch at 1–21 (MKQLKLTGFVIFFFFLTESLT) is a signal peptide. Albumin domains are found at residues 22-210 (LPTQ…EPFI), 211-403 (YYLK…RFNE), and 404-598 (TTEK…PKLA). Intrachain disulfides connect Cys-77-Cys-86, Cys-99-Cys-114, Cys-113-Cys-124, Cys-148-Cys-193, Cys-192-Cys-201, Cys-224-Cys-270, Cys-269-Cys-277, Cys-289-Cys-303, Cys-302-Cys-313, Cys-340-Cys-385, Cys-384-Cys-393, Cys-416-Cys-462, Cys-461-Cys-470, Cys-483-Cys-499, Cys-498-Cys-509, Cys-536-Cys-581, and Cys-580-Cys-589. N-linked (GlcNAc...) asparagine glycosylation is present at Asn-109. The binding pocket for hydrophobic ligands stretch occupies residues 215 to 319 (ALSSYQKNAC…RGECIIYSNK (105 aa)). Asn-434 is a glycosylation site (N-linked (GlcNAc...) asparagine).

Belongs to the ALB/AFP/VDB family. Forms a 1:1 complex with Wnt family members; interacts with WNT3A and WNT5A. Interacts with WNT1, WNT2B, WNT3, WNT7A, WNT7B, WNT8, WNT9A, WNT9B, WNT10A and WNT10B. N-glycosylated; more than 90% of the glycans are sialylated.

It is found in the secreted. Functionally, functions as a carrier for hydrophobic molecules in body fluids. Essential for the solubility and activity of lipidated Wnt family members, including WNT1, WNT2B, WNT3, WNT3A, WNT5A, WNT7A, WNT7B, WNT8, WNT9A, WNT9B, WNT10A and WNT10B. Binds vitamin E. May transport vitamin E in body fluids under conditions where the lipoprotein system is not sufficient. May be involved in the transport of vitamin E across the blood-brain barrier. This is Afamin (AFM) from Bos taurus (Bovine).